The primary structure comprises 81 residues: Cortexin-2 (81 aa).

A helical membrane pass occupies residues 29 to 49 (TAFAFVGMLLVFLGLLIVRCF).

It belongs to the cortexin family.

Its subcellular location is the membrane. The chain is Cortexin-2 (ctxn2) from Danio rerio (Zebrafish).